The chain runs to 215 residues: Cytochrome b6 (215 aa).

A helical transmembrane segment spans residues 32-52 (IFYCLGGITLTCFLVQVATGF). Residue Cys35 coordinates heme c. The heme b site is built by His86 and His100. The next 3 helical transmembrane spans lie at 90–110 (ASMM…TGGF), 116–136 (LTWV…VTGY), and 186–206 (LHTF…FPMI). Heme b is bound by residues His187 and His202.

Belongs to the cytochrome b family. PetB subfamily. In terms of assembly, the 4 large subunits of the cytochrome b6-f complex are cytochrome b6, subunit IV (17 kDa polypeptide, PetD), cytochrome f and the Rieske protein, while the 4 small subunits are PetG, PetL, PetM and PetN. The complex functions as a dimer. Requires heme b as cofactor. It depends on heme c as a cofactor.

Its subcellular location is the plastid. It is found in the chloroplast thylakoid membrane. Component of the cytochrome b6-f complex, which mediates electron transfer between photosystem II (PSII) and photosystem I (PSI), cyclic electron flow around PSI, and state transitions. The protein is Cytochrome b6 of Liriodendron tulipifera (Tuliptree).